We begin with the raw amino-acid sequence, 360 residues long: Plastid lipid-associated protein 3, chloroplastic (360 aa).

Positions Met-1–Leu-37 are enriched in polar residues. The transit peptide at Met-1–Arg-52 directs the protein to the chloroplast. The disordered stretch occupies residues Met-1–Gly-130. Residues Thr-38–Lys-50 show a composition bias toward basic residues. The span at Ser-53–Ser-68 shows a compositional bias: low complexity. Residues Thr-117–Ala-127 are compositionally biased toward acidic residues.

Belongs to the PAP/fibrillin family. Ubiquitous expression among various organs, but only at a very low level.

Its subcellular location is the plastid. The protein localises to the chloroplast. The sequence is that of Plastid lipid-associated protein 3, chloroplastic (PAP3) from Brassica campestris (Field mustard).